A 191-amino-acid chain; its full sequence is Protein YceI (191 aa).

A signal peptide spans 1 to 22 (MKKNLLGFTFASLLFTTGSAVA).

It belongs to the UPF0312 family. Type 1 subfamily.

It is found in the periplasm. This is Protein YceI from Salmonella agona (strain SL483).